Here is a 120-residue protein sequence, read N- to C-terminus: Large ribosomal subunit protein uL18 (120 aa).

It belongs to the universal ribosomal protein uL18 family. As to quaternary structure, part of the 50S ribosomal subunit; part of the 5S rRNA/L5/L18/L25 subcomplex. Contacts the 5S and 23S rRNAs.

Functionally, this is one of the proteins that bind and probably mediate the attachment of the 5S RNA into the large ribosomal subunit, where it forms part of the central protuberance. The protein is Large ribosomal subunit protein uL18 of Bacillus cereus (strain ATCC 10987 / NRS 248).